The sequence spans 531 residues: Zinc finger CCCH-type with G patch domain-containing protein (531 aa).

At M1 the chain carries N-acetylmethionine. Residues E91–K133 are disordered. Over residues A107–G117 the composition is skewed to low complexity. Over residues Q118 to L129 the composition is skewed to acidic residues. The C3H1-type zinc finger occupies K175–V201. The segment at P267–A289 is disordered. The 47-residue stretch at T333–E379 folds into the G-patch domain. Phosphoserine is present on S373. 3 disordered regions span residues T385 to P409, A426 to H446, and R509 to F531. Residues A426–G438 show a composition bias toward low complexity. Positions E518–F531 are enriched in basic and acidic residues.

As to quaternary structure, interacts with CHD4/Mi-2; the interaction is direct. Post-translationally, ubiquitinated in case of infection by HIV-1, leading to its degradation. Ubiquitination is mediated by the CUL4A-RBX1-DDB1-DCAF1/VPRBP complex that is hijacked by HIV-1 via interaction between HIV-1 Vpr and DCAF1/VPRBP. Widely expressed.

Its subcellular location is the nucleus. In terms of biological role, transcription repressor that specifically binds the 5'-GGAG[GA]A[GA]A-3' consensus sequence. Represses transcription by recruiting the chromatin multiprotein complex NuRD to target promoters. Negatively regulates expression of EGFR, a gene involved in cell proliferation, survival and migration. Its ability to repress genes of the EGFR pathway suggest it may act as a tumor suppressor. Able to suppress breast carcinogenesis. Its function is as follows. Antagonizes the transcription repression by isoform 1 by competing for the binding of the NuRD complex. Does not bind DNA. The chain is Zinc finger CCCH-type with G patch domain-containing protein (ZGPAT) from Homo sapiens (Human).